The primary structure comprises 427 residues: Trigger factor (427 aa).

One can recognise a PPIase FKBP-type domain in the interval 163–248 (GDTVVIDFVG…IHEVKEKEVP (86 aa)).

The protein belongs to the FKBP-type PPIase family. Tig subfamily.

It localises to the cytoplasm. The enzyme catalyses [protein]-peptidylproline (omega=180) = [protein]-peptidylproline (omega=0). Its function is as follows. Involved in protein export. Acts as a chaperone by maintaining the newly synthesized protein in an open conformation. Functions as a peptidyl-prolyl cis-trans isomerase. This chain is Trigger factor, found in Streptococcus sanguinis (strain SK36).